Here is a 499-residue protein sequence, read N- to C-terminus: Membrane-associated tyrosine- and threonine-specific cdc2-inhibitory kinase (499 aa).

N-acetylmethionine is present on Met1. The tract at residues 1–29 (MLERPPALAMPMPTEGTPPPLSGTPIPVP) is disordered. Residues 16-28 (GTPPPLSGTPIPV) show a composition bias toward pro residues. Thr17 is modified (phosphothreonine). Residue Ser40 is modified to Phosphoserine. The tract at residues 42–72 (KRPRGLSRSLPPPPPAKGSIPISRLFPPRTP) is disordered. Residues Ser94 and Ser120 each carry the phosphoserine modification. Residues 110–359 (FQRLSRLGHG…AEALLALPVL (250 aa)) form the Protein kinase domain. ATP is bound by residues 116–124 (LGHGSYGEV) and Lys139. Residues Ser143 and Ser160 each carry the phosphoserine modification. The active-site Proton acceptor is the Asp233. Positions 238, 251, and 253 each coordinate Mg(2+). Positions 382 to 398 (LWQALLALLCWLWHGLA) match the Membrane-association motif motif. Positions 398-499 (AHPASWLQPL…SLFEDTLDPT (102 aa)) are interaction with PIN1. Ser426 carries the post-translational modification Phosphoserine; by PLK1. Residues 437–499 (GPSLSPEAVL…SLFEDTLDPT (63 aa)) are interaction with CDC2-CCNB1. A disordered region spans residues 451–485 (GSTSTPRSRCTPRDALDLSDINSEPPRGSFPSFEP). Ser469, Ser473, and Ser482 each carry phosphoserine. Thr495 carries the phosphothreonine; by PLK1 modification.

It belongs to the protein kinase superfamily. Ser/Thr protein kinase family. WEE1 subfamily. Interacts with CDC2-CCNB1 complex. Can also interact with PIN1 when phosphorylated by CDC2-CCNB1. Autophosphorylated. Phosphorylated by CDC2-CCNB1 complexes on undefined serine and threonine residues. The phosphorylation by CDC2-CCNB1 complexes may inhibit the catalytic activity.

Its subcellular location is the endoplasmic reticulum membrane. The protein resides in the golgi apparatus membrane. It carries out the reaction L-seryl-[protein] + ATP = O-phospho-L-seryl-[protein] + ADP + H(+). The enzyme catalyses L-threonyl-[protein] + ATP = O-phospho-L-threonyl-[protein] + ADP + H(+). Negatively regulated by hyperphosphorylation during mitosis. The hyperphosphorylated form does not associate with CCNB1-CDC2 complexes. The PLK1 protein kinase may be required for mitotic phosphorylation. In terms of biological role, acts as a negative regulator of entry into mitosis (G2 to M transition) by phosphorylation of the CDK1 kinase specifically when CDK1 is complexed to cyclins. Mediates phosphorylation of CDK1 predominantly on 'Thr-14'. Also involved in Golgi fragmentation. May be involved in phosphorylation of CDK1 on 'Tyr-15' to a lesser degree, however tyrosine kinase activity is unclear and may be indirect. The sequence is that of Membrane-associated tyrosine- and threonine-specific cdc2-inhibitory kinase (PKMYT1) from Homo sapiens (Human).